The chain runs to 30 residues: 80 kDa carcinoembryonic antigen-binding protein (30 aa).

Binds to carcinoembryonic antigen (CEA). In terms of processing, the N-terminus is blocked.

Its subcellular location is the cell membrane. May play a role in the development of hepatic metastases from colorectal cancers. This is 80 kDa carcinoembryonic antigen-binding protein from Rattus norvegicus (Rat).